Reading from the N-terminus, the 196-residue chain is Signal peptidase complex catalytic subunit SEC11 (196 aa).

Residues 1–14 (MLSSLSPYMANPRQ) lie on the Cytoplasmic side of the membrane. Residues 15 to 33 (TFTQVLNFALVLSTAFMLW) traverse the membrane as a helical; Signal-anchor for type II membrane protein segment. Topologically, residues 34–196 (KGLSVYTNSA…MGLMVILQRE (163 aa)) are lumenal. Catalysis depends on charge relay system residues Ser53 and His92. The disordered stretch occupies residues 101 to 133 (VPGKDKTKKGGKQGVEASPSSLESQKLLTKGDN). Residues 118-133 (SPSSLESQKLLTKGDN) are compositionally biased toward polar residues. Residue Asn134 is glycosylated (N-linked (GlcNAc...) asparagine). Asp138 serves as the catalytic Charge relay system. Residues 182–193 (VLLGFMGLMVIL) are C-terminal short (CTS) helix.

It belongs to the peptidase S26B family. As to quaternary structure, component of the signal peptidase complex (SPC) composed of a catalytic subunit SEC11 and three accessory subunits SPC1, SPC2 and SPC3. The complex induces a local thinning of the ER membrane which is used to measure the length of the signal peptide (SP) h-region of protein substrates. This ensures the selectivity of the complex towards h-regions shorter than 18-20 amino acids. SPC associates with the translocon complex.

It localises to the endoplasmic reticulum membrane. The catalysed reaction is Cleavage of hydrophobic, N-terminal signal or leader sequences from secreted and periplasmic proteins.. In terms of biological role, catalytic component of the signal peptidase complex (SPC) which catalyzes the cleavage of N-terminal signal sequences from nascent proteins as they are translocated into the lumen of the endoplasmic reticulum. Specifically cleaves N-terminal signal peptides that contain a hydrophobic alpha-helix (h-region) shorter than 18-20 amino acids. The chain is Signal peptidase complex catalytic subunit SEC11 (SEC11) from Ajellomyces dermatitidis (strain ER-3 / ATCC MYA-2586) (Blastomyces dermatitidis).